We begin with the raw amino-acid sequence, 399 residues long: Tryptophan synthase beta chain (399 aa).

N6-(pyridoxal phosphate)lysine is present on lysine 92.

The protein belongs to the TrpB family. In terms of assembly, tetramer of two alpha and two beta chains. Pyridoxal 5'-phosphate serves as cofactor.

The enzyme catalyses (1S,2R)-1-C-(indol-3-yl)glycerol 3-phosphate + L-serine = D-glyceraldehyde 3-phosphate + L-tryptophan + H2O. It functions in the pathway amino-acid biosynthesis; L-tryptophan biosynthesis; L-tryptophan from chorismate: step 5/5. In terms of biological role, the beta subunit is responsible for the synthesis of L-tryptophan from indole and L-serine. This is Tryptophan synthase beta chain from Bordetella bronchiseptica (strain ATCC BAA-588 / NCTC 13252 / RB50) (Alcaligenes bronchisepticus).